Reading from the N-terminus, the 794-residue chain is Signal transducer and activator of transcription 5A (794 aa).

Tyr90 carries the phosphotyrosine modification. At Ser128 the chain carries Phosphoserine. Residues 589–686 form the SH2 domain; it reads WNDGAILGFV…EVFSKYYTPV (98 aa). At Tyr682 the chain carries Phosphotyrosine. The residue at position 694 (Tyr694) is a Phosphotyrosine; by JAK2. The interval 771 to 794 is disordered; it reads PMDSLEPSLPPPTGLFTPGRGSLS.

It belongs to the transcription factor STAT family. Forms a homodimer or a heterodimer with a related family member. Binds NR3C1. Interacts with NCOA1 and SOCS7. Interacts with ERBB4. Interacts with EBF4. Interacts with CD69. ISGylated. Post-translationally, tyrosine phosphorylated in response to KITLG/SCF, IL2, IL3, IL7, IL15, CSF2/GMCSF, GH1, PRL, EPO and THPO. Activated KIT promotes phosphorylation on tyrosine residues and subsequent translocation to the nucleus. Tyrosine phosphorylated in response to constitutively activated FGFR1, FGFR2, FGFR3 and FGFR4. Tyrosine phosphorylation is required for DNA-binding activity and dimerization. Serine phosphorylation is also required for maximal transcriptional activity. Tyrosine phosphorylated in response to signaling via activated FLT3; wild-type FLT3 results in much weaker phosphorylation than constitutively activated mutant FLT3. Alternatively, can be phosphorylated by JAK2 at Tyr-694.

It localises to the cytoplasm. It is found in the nucleus. Its function is as follows. Carries out a dual function: signal transduction and activation of transcription. Mediates cellular responses to the cytokine KITLG/SCF and other growth factors. May mediate cellular responses to activated FGFR1, FGFR2, FGFR3 and FGFR4. Binds to the GAS element and activates PRL-induced transcription. Regulates the expression of milk proteins during lactation. This is Signal transducer and activator of transcription 5A (STAT5A) from Bos taurus (Bovine).